Consider the following 465-residue polypeptide: MKTNPLPATPSVWGGSTVELPPTTRDTAGQGLLRRVLRPPISRRDGPGLPRGSGPRRAASTLWLLGLDGTDAPPGALTPNDDTEQALDKILRGTMRGGAALIGSPRHHLTRQVILTDLCQPNADRAGTLLLALRHPADLPHLAHQRAPPGRQTERLGEAWGQLMEATALGSGRAESGCTRAGLVSFNFLVAACAASYDARDAADAVRAHVTANYRGTRVGARLDRFSECLRAMVHTHVFPHEVMRFFGGLVSWVTQDELASVTAVCAGPQEAAHTGHPGRPRSAVILPACAFVDLDAELGLGGPGAAFLYLVFTYRQRRDQELCCVYVIKSQLPPRGLEPALERLFGRLRITNTIHGTEDMTPPAPNRNPDFPLAGLAANPQTPRCSAGQVTNPQFADRLYRWQPDLRGRPTARTCTYAAFAELGMMPEDSPRCLHRTERFGAVSVPVVILEGVVWRPGEWRACA.

The interval Met-1–Gly-29 is disordered.

The protein belongs to the herpesviridae TRX1 protein family. In terms of assembly, interacts with TRX2, MCP and capsid vertex component 2/CVC2.

It is found in the virion. It localises to the host nucleus. In terms of biological role, structural component of the T=16 icosahedral capsid. The capsid is composed of pentamers and hexamers of major capsid protein/MCP, which are linked together by heterotrimers called triplexes. These triplexes are formed by a single molecule of triplex protein 1/TRX1 and two copies of triplex protein 2/TRX2. Additionally, TRX1 is required for efficient transport of TRX2 to the nucleus, which is the site of capsid assembly. In Homo sapiens (Human), this protein is Triplex capsid protein 1.